The primary structure comprises 310 residues: Melanocyte-stimulating hormone receptor (310 aa).

The Extracellular portion of the chain corresponds to 1-37; that stretch reads MPMQGAQRKLLGSLNSTPTATSNLGLAANRTGAPCLE. Asparagine 29 is a glycosylation site (N-linked (GlcNAc...) asparagine). Residues 38-63 traverse the membrane as a helical segment; sequence LPIPDGLFLSLGLVSLVENVLVVAAI. Topologically, residues 64–72 are cytoplasmic; the sequence is AKNRNLHSS. The helical transmembrane segment at 73 to 93 threads the bilayer; sequence MYCFICCLALSDLLVSGSNML. Residues 94–110 lie on the Extracellular side of the membrane; that stretch reads EAGVLATRASVVQQLHN. A helical membrane pass occupies residues 111–132; sequence TIDVLTCSSMLCSLCFLGAIAV. Topologically, residues 133-155 are cytoplasmic; sequence DRYISIFYALRYHSIMTLPRAQR. Residues 156–175 form a helical membrane-spanning segment; it reads AVAAIWVASVLSSTLFITYY. Residues 176-183 lie on the Extracellular side of the membrane; it reads DHAAVLLC. The helical transmembrane segment at 184–203 threads the bilayer; it reads LVVFFLAMLVLMAVLYVHML. The Cytoplasmic portion of the chain corresponds to 204-232; the sequence is AWACQHAQGIIRLHKRQPPAHKGFGLRGA. A helical membrane pass occupies residues 233-258; sequence ATLTILLGIFFLCWGPFFLRLTLVVF. At 259-271 the chain is on the extracellular side; that stretch reads CPQHLTCNCIFKN. Residues 272 to 292 form a helical membrane-spanning segment; that stretch reads FKVFLTLIICNTIIDPLIYAF. Over 293–310 the chain is Cytoplasmic; the sequence is RSQELRRTLKEVLGRGRW.

This sequence belongs to the G-protein coupled receptor 1 family. In terms of assembly, interacts with MGRN1, but does not undergo MGRN1-mediated ubiquitination; this interaction competes with GNAS-binding and thus inhibits agonist-induced cAMP production. Interacts with OPN3; the interaction results in a decrease in MC1R-mediated cAMP signaling and ultimately a decrease in melanin production in melanocytes.

The protein resides in the cell membrane. Functionally, receptor for MSH (alpha, beta and gamma) and ACTH. The activity of this receptor is mediated by G proteins which activate adenylate cyclase. Mediates melanogenesis, the production of eumelanin (black/brown) and phaeomelanin (red/yellow), via regulation of cAMP signaling in melanocytes. The sequence is that of Melanocyte-stimulating hormone receptor (MC1R) from Leontopithecus chrysomelas (Golden-headed lion tamarin).